The sequence spans 476 residues: Bifunctional protein HldE (476 aa).

The segment at 1 to 319 is ribokinase; that stretch reads MKLTLPDYDQ…EAIYGSQDSG (319 aa). 195 to 198 lines the ATP pocket; it reads NLSE. Asp264 is a catalytic residue. Residues 344–476 form a cytidylyltransferase region; the sequence is MTNGCFDILH…IIEAIRGGKG (133 aa).

It in the N-terminal section; belongs to the carbohydrate kinase PfkB family. In the C-terminal section; belongs to the cytidylyltransferase family. In terms of assembly, homodimer.

The enzyme catalyses D-glycero-beta-D-manno-heptose 7-phosphate + ATP = D-glycero-beta-D-manno-heptose 1,7-bisphosphate + ADP + H(+). It carries out the reaction D-glycero-beta-D-manno-heptose 1-phosphate + ATP + H(+) = ADP-D-glycero-beta-D-manno-heptose + diphosphate. The protein operates within nucleotide-sugar biosynthesis; ADP-L-glycero-beta-D-manno-heptose biosynthesis; ADP-L-glycero-beta-D-manno-heptose from D-glycero-beta-D-manno-heptose 7-phosphate: step 1/4. It participates in nucleotide-sugar biosynthesis; ADP-L-glycero-beta-D-manno-heptose biosynthesis; ADP-L-glycero-beta-D-manno-heptose from D-glycero-beta-D-manno-heptose 7-phosphate: step 3/4. Catalyzes the phosphorylation of D-glycero-D-manno-heptose 7-phosphate at the C-1 position to selectively form D-glycero-beta-D-manno-heptose-1,7-bisphosphate. Functionally, catalyzes the ADP transfer from ATP to D-glycero-beta-D-manno-heptose 1-phosphate, yielding ADP-D-glycero-beta-D-manno-heptose. In Photobacterium profundum (strain SS9), this protein is Bifunctional protein HldE.